The sequence spans 624 residues: MEFIDYDKQYDVIVVGAGHAGCEAALAAARMGCETLLLTINLDAIALMSCNPAIGGSAKGHLVKEIDALGGEMGKNIDATGIQFRILNTRKGPAVRASRAQADKQLYRLRMKHVMEQQERLSLKQAEVTGIVVEDGEVRGVDTKVGVRYLGATVILTTGTFMRGLIHVGLTNYPGGRAGDLPSVGLSDQLRELGFAVGRLKTGTPARLDGRTIDFTRLEPQHGDDPPVPFSFSTERIDQPQVPCYIAYTNPRSHEIIRSGLDRSPLYAGVIEGIGPRYCPSIEDKVVRFPEKDRHQTFLEPEGRDTVEYYPSGLSTSLPIDIQWAFYRSIEGLERVEIMRPAYAIEYDYVDPIQLHASLETKLVRNLYHAGQINGTSGYEEAAGQGLMAGINAALRVRDKEPLILGRSEAYIGVMIDDLVTLGTREPYRMFTSRAEYRLLLREDNADLRLRERGHAVGLVPEGAYQRFLEKRERIGAELARLKGTKLLPSEADPDFLAAFSLTALQNALTYEQLLRRPDITYEELCRIDPRAAEVPPVVREQVEIQIKYQGYIERQLDQVERARKLEGTRVPAGFDYGALPGLSAEVREKLAKFRPDTLGQASRIQGVTPAAVGILSLALKARG.

Residues 16–21 (GAGHAG), V128, and S183 contribute to the FAD site. 275-289 (GPRYCPSIEDKVVRF) is an NAD(+) binding site. Residue Q372 participates in FAD binding.

Belongs to the MnmG family. Homodimer. Heterotetramer of two MnmE and two MnmG subunits. The cofactor is FAD.

The protein resides in the cytoplasm. Functionally, NAD-binding protein involved in the addition of a carboxymethylaminomethyl (cmnm) group at the wobble position (U34) of certain tRNAs, forming tRNA-cmnm(5)s(2)U34. The polypeptide is tRNA uridine 5-carboxymethylaminomethyl modification enzyme MnmG (Geobacter metallireducens (strain ATCC 53774 / DSM 7210 / GS-15)).